Reading from the N-terminus, the 1993-residue chain is [F-actin]-monooxygenase MICAL3 (1993 aa).

A monooxygenase domain region spans residues 2-494; it reads EERKQETTNQ…RHLYDSGETK (493 aa). FAD-binding positions include Cys-97, 116–118, 123–125, Phe-183, Tyr-298, and Asp-398; these read EKR and RNN. The 107-residue stretch at 518-624 folds into the Calponin-homology (CH) domain; it reads VARSSKLLGW…YLTQFYEMFK (107 aa). At Ser-649 the chain carries Phosphoserine. The disordered stretch occupies residues 658–704; that stretch reads GQTISRKRSPKDKKEKDSDGAGKRRKTSQSEEEEPPRSYKGERPTLV. Positions 669–679 are enriched in basic and acidic residues; the sequence is DKKEKDSDGAG. Phosphoserine occurs at positions 685 and 687. The LIM zinc-binding domain occupies 762–824; it reads DTCYFCQKRV…KPHYCYRLSG (63 aa). Residues Cys-764, Cys-767, His-785, Cys-788, Cys-791, Cys-794, Cys-814, and His-817 each coordinate Zn(2+). The interval 854–886 is disordered; that stretch reads NGLASVAASSAERSPGTSMNGLEEPSIAKRLRG. Residues 860-873 show a composition bias toward polar residues; the sequence is AASSAERSPGTSMN. Phosphothreonine is present on Thr-887. Disordered regions lie at residues 905 to 1023, 1039 to 1309, 1332 to 1546, and 1559 to 1837; these read ELEE…RLQQ, WTHI…LSGP, IRRS…FFTP, and KENG…EELK. Over residues 938-951 the composition is skewed to acidic residues; sequence SEMEEEEEEDDEDD. The span at 975-988 shows a compositional bias: basic and acidic residues; the sequence is GRSEEELEASKNFE. A Phosphoserine modification is found at Ser-977. Over residues 989 to 1014 the composition is skewed to acidic residues; that stretch reads PEEEEEEEEYEEEDEEYEEEEEEESS. The span at 1039-1051 shows a compositional bias: basic and acidic residues; it reads WTHIREREAEERM. Acidic residues predominate over residues 1065–1090; that stretch reads DEDDLEEDADSEPAETEGEAAEDGDP. A compositionally biased stretch (basic and acidic residues) spans 1111–1148; the sequence is EAEHRLQSQAKVKAELELRVSENEEEKPSDAPKQEERG. Residues Ser-1131 and Ser-1187 each carry the phosphoserine modification. The segment covering 1199–1212 has biased composition (basic and acidic residues); it reads LREKPKAEVPEEQK. Polar residues predominate over residues 1230 to 1239; that stretch reads SPTSPTSLQP. Residues 1245–1255 show a composition bias toward pro residues; sequence PPTPPTPPPTQ. The span at 1257 to 1275 shows a compositional bias: polar residues; that stretch reads PICSQPQPSSDASIPSPTK. Ser-1272 carries the post-translational modification Phosphoserine. Phosphothreonine is present on Thr-1274. Ser-1276 and Ser-1335 each carry phosphoserine. Thr-1339 bears the Phosphothreonine mark. Phosphoserine occurs at positions 1369 and 1382. Residues 1405 to 1420 are compositionally biased toward basic and acidic residues; sequence PSDKELRSSQEERRDL. Residues 1421-1433 are compositionally biased toward low complexity; the sequence is SSSSGLGLHDSSS. Residue Ser-1431 is modified to Phosphoserine. The span at 1434–1452 shows a compositional bias: polar residues; sequence NMKTLGSQSFNTSDSTMLT. A Phosphothreonine modification is found at Thr-1452. Positions 1454 to 1465 are enriched in pro residues; it reads PSSPPPPPPPNE. Residues 1516–1530 show a composition bias toward acidic residues; it reads SVDEIPFADDVEDTY. Residues 1584 to 1600 show a composition bias toward basic and acidic residues; sequence EAKELAEERMRAREKSV. Residues 1623 to 1633 are compositionally biased toward polar residues; the sequence is SSRSHTAQSQG. Residue Ser-1640 is modified to Phosphoserine. A compositionally biased stretch (low complexity) spans 1665–1685; the sequence is SPPSDSGGPDGSVTSSEGSSG. The segment covering 1686 to 1704 has biased composition (basic residues); sequence KSKKRSSLFSPRRNKKEKK. A phosphoserine mark is found at Ser-1692 and Ser-1695. The span at 1754–1763 shows a compositional bias: polar residues; sequence TPSSGATVDS. Positions 1795–1811 are enriched in basic and acidic residues; that stretch reads ILERSSQKSKREPRTYT. Residues 1817 to 1983 are a coiled coil; that stretch reads AKLTRRVQKA…EEDKDLEAAM (167 aa). Positions 1819–1830 are enriched in basic residues; it reads LTRRVQKAARRQ. The bMERB domain occupies 1832–1981; it reads KQEELKRLHR…EKEEDKDLEA (150 aa). Ser-1903 carries the post-translational modification Phosphoserine.

The protein belongs to the Mical family. In terms of assembly, interacts with RAB1B, RAB8A, RAB10, RAB13 and RAB15 (in their GTP-bound forms); binding to RAB1B is of low affinity compared to other Rab proteins; at least in case of RAB8A can bind 2 molecules of RAB8A simultaneously through a high and a low affinity binding site, respectively. Interacts with ERC1 and RAB8A; may bridge ERC1 with RAB8A. Interacts with KIF23 and ERC1; enhances the interaction between KIF23 and ERC1. Interacts with NINL. It depends on FAD as a cofactor.

It is found in the cytoplasm. It localises to the cell cortex. Its subcellular location is the cytoskeleton. The protein resides in the nucleus. The protein localises to the midbody. It is found in the spindle. It localises to the cilium basal body. The catalysed reaction is L-methionyl-[F-actin] + NADPH + O2 + H(+) = L-methionyl-(R)-S-oxide-[F-actin] + NADP(+) + H2O. In terms of biological role, monooxygenase that promotes depolymerization of F-actin by mediating oxidation of specific methionine residues on actin to form methionine-sulfoxide, resulting in actin filament disassembly and preventing repolymerization. In the absence of actin, it also functions as a NADPH oxidase producing H(2)O(2). Seems to act as Rab effector protein and play a role in vesicle trafficking. Involved in exocytic vesicles tethering and fusion: the monooxygenase activity is required for this process and implicates RAB8A associated with exocytotic vesicles. Required for cytokinesis. Contributes to stabilization and/or maturation of the intercellular bridge independently of its monooxygenase activity. Promotes recruitment of Rab8 and ERC1 to the intercellular bridge, and together these proteins are proposed to function in timely abscission. This chain is [F-actin]-monooxygenase MICAL3 (Mical3), found in Mus musculus (Mouse).